A 222-amino-acid polypeptide reads, in one-letter code: Isoprenyl transferase (222 aa).

Asp12 is a catalytic residue. Asp12 lines the Mg(2+) pocket. Residues 13 to 16, Trp17, and 57 to 59 each bind substrate; these read GNRR and STE. Asn60 acts as the Proton acceptor in catalysis. Substrate-binding positions include Trp61, Arg63, Arg171, and 177-179; that span reads RLS. Glu190 serves as a coordination point for Mg(2+).

Belongs to the UPP synthase family. Homodimer. It depends on Mg(2+) as a cofactor.

Its function is as follows. Catalyzes the condensation of isopentenyl diphosphate (IPP) with allylic pyrophosphates generating different type of terpenoids. In Campylobacter jejuni subsp. jejuni serotype O:2 (strain ATCC 700819 / NCTC 11168), this protein is Isoprenyl transferase (uppS).